The sequence spans 366 residues: Protein disulfide isomerase-like 2-1 (366 aa).

An N-terminal signal peptide occupies residues 1–29; sequence MATPQISRKALASLLLLVAAAAAVSTASA. Thioredoxin domains are found at residues 30-138 and 139-257; these read DDVL…SEAA and TNVK…EKCG. Catalysis depends on nucleophile residues Cys-59, Cys-62, Cys-178, and Cys-181. Cystine bridges form between Cys-59/Cys-62 and Cys-178/Cys-181.

The protein belongs to the protein disulfide isomerase family.

The protein localises to the secreted. The enzyme catalyses Catalyzes the rearrangement of -S-S- bonds in proteins.. In terms of biological role, acts as a protein-folding catalyst that interacts with nascent polypeptides to catalyze the formation, isomerization, and reduction or oxidation of disulfide bonds. May play a role in storage protein biogenesis. This is Protein disulfide isomerase-like 2-1 (PDIL2-1) from Oryza sativa subsp. japonica (Rice).